We begin with the raw amino-acid sequence, 299 residues long: Acetylglutamate kinase (299 aa).

Substrate is bound by residues 72-73 (GG), Arg-94, and Asn-196.

Belongs to the acetylglutamate kinase family. ArgB subfamily.

The protein localises to the cytoplasm. It carries out the reaction N-acetyl-L-glutamate + ATP = N-acetyl-L-glutamyl 5-phosphate + ADP. Its pathway is amino-acid biosynthesis; L-arginine biosynthesis; N(2)-acetyl-L-ornithine from L-glutamate: step 2/4. Its function is as follows. Catalyzes the ATP-dependent phosphorylation of N-acetyl-L-glutamate. The sequence is that of Acetylglutamate kinase from Burkholderia ambifaria (strain MC40-6).